A 201-amino-acid chain; its full sequence is FMN-dependent NADH:quinone oxidoreductase (201 aa).

FMN-binding positions include Ser-10, 16–18, 96–99, and 140–143; these read SQS, MYNF, and SRGG.

Belongs to the azoreductase type 1 family. Homodimer. The cofactor is FMN.

The enzyme catalyses 2 a quinone + NADH + H(+) = 2 a 1,4-benzosemiquinone + NAD(+). It carries out the reaction N,N-dimethyl-1,4-phenylenediamine + anthranilate + 2 NAD(+) = 2-(4-dimethylaminophenyl)diazenylbenzoate + 2 NADH + 2 H(+). Functionally, quinone reductase that provides resistance to thiol-specific stress caused by electrophilic quinones. Also exhibits azoreductase activity. Catalyzes the reductive cleavage of the azo bond in aromatic azo compounds to the corresponding amines. The chain is FMN-dependent NADH:quinone oxidoreductase from Citrobacter koseri (strain ATCC BAA-895 / CDC 4225-83 / SGSC4696).